A 406-amino-acid polypeptide reads, in one-letter code: Cytochrome bc1 complex Rieske iron-sulfur subunit (406 aa).

The next 3 helical transmembrane spans lie at 56–76, 98–118, and 166–186; these read VGIWFGIGIVSALAFLAVYLF, LLGLTSGLAILSLGIGVIFYI, and MLGIGGVLAGLTIIAPLGGMV. Residues 291–388 enclose the Rieske domain; that stretch reads HGPRNAVMLI…ITVDEEGYLV (98 aa). Residues C331, H333, C350, and H353 each coordinate [2Fe-2S] cluster. An intrachain disulfide couples C336 to C352.

It belongs to the Rieske iron-sulfur protein family. As to quaternary structure, the cytochrome bc1 complex is composed of a cytochrome b (QcrB), the Rieske iron-sulfur protein (QcrA) and a diheme cytochrome c (QcrC) subunit. The bc1 complex forms a supercomplex with cytochrome c oxidase (cytochrome aa3). It depends on [2Fe-2S] cluster as a cofactor.

It is found in the cell membrane. Its function is as follows. Iron-sulfur subunit of the cytochrome bc1 complex, an essential component of the respiratory electron transport chain required for ATP synthesis. The bc1 complex catalyzes the oxidation of menaquinol and the reduction of cytochrome c in the respiratory chain. The bc1 complex operates through a Q-cycle mechanism that couples electron transfer to generation of the proton gradient that drives ATP synthesis. The sequence is that of Cytochrome bc1 complex Rieske iron-sulfur subunit (qcrA) from Corynebacterium diphtheriae (strain ATCC 700971 / NCTC 13129 / Biotype gravis).